The chain runs to 190 residues: Peptide methionine sulfoxide reductase A2-2 (190 aa).

Residues 1 to 20 are disordered; it reads MSNDTGADGGAANPDLGPDA. Positions 10–20 are enriched in low complexity; it reads GAANPDLGPDA.

The protein belongs to the MsrA Met sulfoxide reductase family.

The protein localises to the cytoplasm. It localises to the cytosol. It carries out the reaction L-methionyl-[protein] + [thioredoxin]-disulfide + H2O = L-methionyl-(S)-S-oxide-[protein] + [thioredoxin]-dithiol. The enzyme catalyses [thioredoxin]-disulfide + L-methionine + H2O = L-methionine (S)-S-oxide + [thioredoxin]-dithiol. Its function is as follows. Catalyzes the reduction of methionine sulfoxide (MetSO) to methionine in proteins. Plays a protective role against oxidative stress by restoring activity to proteins that have been inactivated by methionine oxidation. MSRA family specifically reduces the MetSO S-enantiomer. This Oryza sativa subsp. japonica (Rice) protein is Peptide methionine sulfoxide reductase A2-2 (MSRA2-2).